The chain runs to 87 residues: Phosphocarrier protein HPr (87 aa).

The 87-residue stretch at 1–87 (MASKDFHIVA…AETMTKEGLA (87 aa)) folds into the HPr domain. Histidine 15 serves as the catalytic Pros-phosphohistidine intermediate. At serine 46 the chain carries Phosphoserine; by HPrK/P.

It belongs to the HPr family.

The protein localises to the cytoplasm. Its activity is regulated as follows. Phosphorylation on Ser-46 inhibits the phosphoryl transfer from enzyme I to HPr. Functionally, general (non sugar-specific) component of the phosphoenolpyruvate-dependent sugar phosphotransferase system (sugar PTS). This major carbohydrate active-transport system catalyzes the phosphorylation of incoming sugar substrates concomitantly with their translocation across the cell membrane. The phosphoryl group from phosphoenolpyruvate (PEP) is transferred to the phosphoryl carrier protein HPr by enzyme I. Phospho-HPr then transfers it to the PTS EIIA domain. In terms of biological role, P-Ser-HPr interacts with the catabolite control protein A (CcpA), forming a complex that binds to DNA at the catabolite response elements cre, operator sites preceding a large number of catabolite-regulated genes. Thus, P-Ser-HPr is a corepressor in carbon catabolite repression (CCR), a mechanism that allows bacteria to coordinate and optimize the utilization of available carbon sources. P-Ser-HPr also plays a role in inducer exclusion, in which it probably interacts with several non-PTS permeases and inhibits their transport activity. The polypeptide is Phosphocarrier protein HPr (ptsH) (Streptococcus salivarius).